A 185-amino-acid chain; its full sequence is Ribosome-recycling factor (185 aa).

The disordered stretch occupies residues 138 to 185 (ALKKQEKDGEITEDEERRLEKEVQKVTDESTKKIDQMADNKRKEIIQG).

This sequence belongs to the RRF family.

It is found in the cytoplasm. Functionally, responsible for the release of ribosomes from messenger RNA at the termination of protein biosynthesis. May increase the efficiency of translation by recycling ribosomes from one round of translation to another. This Lactobacillus delbrueckii subsp. bulgaricus (strain ATCC BAA-365 / Lb-18) protein is Ribosome-recycling factor.